The chain runs to 207 residues: Transcriptional regulator YqjI (207 aa).

Over residues 1–40 (MSHHHEGCCKHEGQPRHEGCCKGEKSEHEHCGHGHQHEHG) the composition is skewed to basic and acidic residues. The disordered stretch occupies residues 1–46 (MSHHHEGCCKHEGQPRHEGCCKGEKSEHEHCGHGHQHEHGQCCGGR).

Oligomer (probable predominant form) and monomer.

Its activity is regulated as follows. Divalent metals such as nickel and iron have a similar negative effect on YqjI DNA-binding activity. Functionally, represses the expression of YqjH which is involved in iron homeostasis under excess nickel conditions. Also represses its own expression. The protein is Transcriptional regulator YqjI (yqjI) of Escherichia coli (strain K12).